The following is a 220-amino-acid chain: Small ribosomal subunit protein uS3c (220 aa).

In terms of domain architecture, KH type-2 spans 43-120 (IQHYVEKNTR…RLNIAIIRVA (78 aa)).

The protein belongs to the universal ribosomal protein uS3 family. Part of the 30S ribosomal subunit.

It localises to the plastid. Its subcellular location is the chloroplast. The protein is Small ribosomal subunit protein uS3c (rps3) of Piper cenocladum (Ant piper).